We begin with the raw amino-acid sequence, 137 residues long: Aspartate 1-decarboxylase (137 aa).

The active-site Schiff-base intermediate with substrate; via pyruvic acid is the serine 25. Serine 25 is subject to Pyruvic acid (Ser). Threonine 57 serves as a coordination point for substrate. Tyrosine 58 serves as the catalytic Proton donor. Substrate is bound at residue 73–75 (GAA).

This sequence belongs to the PanD family. In terms of assembly, heterooctamer of four alpha and four beta subunits. Pyruvate is required as a cofactor. In terms of processing, is synthesized initially as an inactive proenzyme, which is activated by self-cleavage at a specific serine bond to produce a beta-subunit with a hydroxyl group at its C-terminus and an alpha-subunit with a pyruvoyl group at its N-terminus.

The protein localises to the cytoplasm. It catalyses the reaction L-aspartate + H(+) = beta-alanine + CO2. It functions in the pathway cofactor biosynthesis; (R)-pantothenate biosynthesis; beta-alanine from L-aspartate: step 1/1. In terms of biological role, catalyzes the pyruvoyl-dependent decarboxylation of aspartate to produce beta-alanine. This is Aspartate 1-decarboxylase from Thermobifida fusca (strain YX).